Here is a 291-residue protein sequence, read N- to C-terminus: Phosphate import ATP-binding protein PstB (291 aa).

The ABC transporter domain maps to 45 to 286 (YSTQNLDLWY…PADKQTEDYI (242 aa)). ATP is bound at residue 77–84 (GPSGCGKS).

Belongs to the ABC transporter superfamily. Phosphate importer (TC 3.A.1.7) family. As to quaternary structure, the complex is composed of two ATP-binding proteins (PstB), two transmembrane proteins (PstC and PstA) and a solute-binding protein (PstS).

The protein resides in the cell membrane. It carries out the reaction phosphate(out) + ATP + H2O = ADP + 2 phosphate(in) + H(+). In terms of biological role, part of the ABC transporter complex PstSACB involved in phosphate import. Responsible for energy coupling to the transport system. The polypeptide is Phosphate import ATP-binding protein PstB (Staphylococcus epidermidis (strain ATCC 35984 / DSM 28319 / BCRC 17069 / CCUG 31568 / BM 3577 / RP62A)).